Consider the following 948-residue polypeptide: Glycine dehydrogenase (decarboxylating) (948 aa).

K696 is modified (N6-(pyridoxal phosphate)lysine).

The protein belongs to the GcvP family. In terms of assembly, the glycine cleavage system is composed of four proteins: P, T, L and H. It depends on pyridoxal 5'-phosphate as a cofactor.

It catalyses the reaction N(6)-[(R)-lipoyl]-L-lysyl-[glycine-cleavage complex H protein] + glycine + H(+) = N(6)-[(R)-S(8)-aminomethyldihydrolipoyl]-L-lysyl-[glycine-cleavage complex H protein] + CO2. Functionally, the glycine cleavage system catalyzes the degradation of glycine. The P protein binds the alpha-amino group of glycine through its pyridoxal phosphate cofactor; CO(2) is released and the remaining methylamine moiety is then transferred to the lipoamide cofactor of the H protein. This chain is Glycine dehydrogenase (decarboxylating), found in Akkermansia muciniphila (strain ATCC BAA-835 / DSM 22959 / JCM 33894 / BCRC 81048 / CCUG 64013 / CIP 107961 / Muc).